The following is a 67-amino-acid chain: UPF0519 protein C (67 aa).

The segment at Lys18–Leu37 is disordered. Over residues Asn22 to Asn33 the composition is skewed to low complexity.

Belongs to the UPF0519 family.

The sequence is that of UPF0519 protein C from Dictyostelium discoideum (Social amoeba).